Reading from the N-terminus, the 271-residue chain is 3-methyl-2-oxobutanoate hydroxymethyltransferase (271 aa).

Mg(2+) contacts are provided by D51 and D90. 3-methyl-2-oxobutanoate-binding positions include 51-52 (DS), D90, and K118. E120 provides a ligand contact to Mg(2+). E186 functions as the Proton acceptor in the catalytic mechanism.

The protein belongs to the PanB family. As to quaternary structure, homodecamer; pentamer of dimers. The cofactor is Mg(2+).

It is found in the cytoplasm. The catalysed reaction is 3-methyl-2-oxobutanoate + (6R)-5,10-methylene-5,6,7,8-tetrahydrofolate + H2O = 2-dehydropantoate + (6S)-5,6,7,8-tetrahydrofolate. It functions in the pathway cofactor biosynthesis; (R)-pantothenate biosynthesis; (R)-pantoate from 3-methyl-2-oxobutanoate: step 1/2. Functionally, catalyzes the reversible reaction in which hydroxymethyl group from 5,10-methylenetetrahydrofolate is transferred onto alpha-ketoisovalerate to form ketopantoate. The chain is 3-methyl-2-oxobutanoate hydroxymethyltransferase from Xanthomonas oryzae pv. oryzae (strain MAFF 311018).